Here is a 1403-residue protein sequence, read N- to C-terminus: MSSKPPSNTPKFSYARALASSQSNKSNSTKASENNTATAEKQAVKPSGVEPTNTSRANAQKKTESTGKITSEADTEKYNSSKSPVNKEGSVEKKSSEKSSTNNKPWRGDNTSKPSANSSAERTSSQHQKPETSSQIGKDNAAPVENVNEKSTSQETAPPVSTVPIQFGSITRNAAIPSKPKVSGNMQNKSGVSSYSSKSQSVNSSVTSNPPHTEEPVAAKPEASSTATKGPRPTTSASNTNTSPANGAPTNKPSTDINTTDPATQTTQVSASNSPALSGSSTPSNTSSRSNRQNHGNFSEKRHYDRYGNSHPSYNKYSHYQHGFNYNNSGNNRNESGHPRFRNSRRNYNNQGAYPTYMSNGRSANQSPRNNPQNVNNGSTPIQIPVSLQTPYGQVYGQPQYIVDPNMVQYGPILQPGYVPQYYPVYHQTPYTQNFPNMSRSGSQVSDQVVESPNSSTLSPRNGFAPIVKQQKKSSALKIVNPVTHTEVVVPQKNASSPNPSETNSRAETPTAAPPQISEEEASQRKDAIKLAIQQRIQEKAEAEAKRKAEEKARLEAEENAKREAEEQAKREAEEKAKREAEEKAKREAEEKAKREAEENAKREAEEKAKREAEEKAKREAEEKAKREAEEKAKREAEEKAKREAEEKAKREAEEKAKREAEENAKREAEEKAKREAEENAKREAEEKVKRETEENAKRKAEEEGKREADKNPEIKSSAPLASSEANVDTSKQTNATEPEVVDKTKVEKLKASEGKSTSSLSSPSHSTSSKRDLLSGLESLSLKTNPKSEQCLESLLNSQFITDFSALVYPSTIKPPSTEEALKAGKYEYDVPFLLQFQSVYTDKPMKGWDERMKETVASAFSDKSSRGMYSSSRQSSRSGSNTHSHAGPGFGGPSERKGISRLGIDRGFSSSGAGFGSGSNYKSAPSRGVSHHGHGGMSGSHRGSQRGSRRGGGERDKPDPSSLTIPVDQVAPLQLSANRWQPKKLTEKPAETKGEDEEALLPPEVVQRKVKGSLNKMTLEKFDKISDQILEIAMQSRKENDGRTLKQVIQLTFEKATDEPNFSNMYARFARKMMDSIDDSIRDEGVLDKNNQPVRGGLLFRKYLLSRCQEDFERGWKANLPSGKAGEAEIMSDEYYVAAAIKRRGLGLVRFIGELFKLSMLSEKIMHECIKRLLGNVTDPEEEEIESLCRLLMTVGVNIDATEKGHAAMDVYVLRMETITKIPNLPSRIKFMLMDVMDSRKNGWAVKNEVEKGPKTIAEIHEEAERKKALAESQRPSSGRMHGRDMNRGDSRMGGRGSNPPFSSSDWSNNKDGYARLGQGIRGLKSGTQGSHGPTSLSSMLKGGSVSRTPSRQNSALRREQSVRAPPSNVAVTSANSFELLEEHDHDNDGGQKDSNSKTSS.

Composition is skewed to polar residues over residues 1 to 11 (MSSKPPSNTPK), 19 to 39 (ASSQ…TATA), and 50 to 60 (EPTNTSRANAQ). Disordered regions lie at residues 1–381 (MSSK…GSTP), 439–464 (SRSG…RNGF), 488–774 (VVVP…KRDL), and 861–1003 (AFSD…EALL). The residue at position 83 (Ser83) is a Phosphoserine. A compositionally biased stretch (polar residues) spans 109-137 (DNTSKPSANSSAERTSSQHQKPETSSQIG). Low complexity-rich tracts occupy residues 190-208 (SGVS…SVTS) and 231-248 (PRPT…ANGA). The span at 249–269 (PTNKPSTDINTTDPATQTTQV) shows a compositional bias: polar residues. The span at 270 to 291 (SASNSPALSGSSTPSNTSSRSN) shows a compositional bias: low complexity. A compositionally biased stretch (basic and acidic residues) spans 298–308 (FSEKRHYDRYG). The segment covering 325 to 334 (NYNNSGNNRN) has biased composition (low complexity). 3 stretches are compositionally biased toward polar residues: residues 346 to 381 (RNYN…GSTP), 439 to 460 (SRSG…TLSP), and 493 to 508 (KNAS…SRAE). 4 positions are modified to phosphoserine: Ser452, Ser455, Ser456, and Ser459. A compositionally biased stretch (basic and acidic residues) spans 537 to 714 (IQEKAEAEAK…GKREADKNPE (178 aa)). Over residues 720–737 (PLASSEANVDTSKQTNAT) the composition is skewed to polar residues. Basic and acidic residues predominate over residues 741–754 (VVDKTKVEKLKASE). Low complexity predominate over residues 757 to 768 (STSSLSSPSHST). Residues Ser866 and Ser882 each carry the phosphoserine modification. The span at 868-886 (RGMYSSSRQSSRSGSNTHS) shows a compositional bias: low complexity. Thr884 carries the post-translational modification Phosphothreonine. Phosphoserine is present on residues Ser886, Ser911, Ser919, and Ser921. Position 923 is a phosphotyrosine (Tyr923). Over residues 986-995 (KLTEKPAETK) the composition is skewed to basic and acidic residues. An MIF4G domain is found at 1009–1245 (QRKVKGSLNK…MDVMDSRKNG (237 aa)). The disordered stretch occupies residues 1266–1403 (AERKKALAES…QKDSNSKTSS (138 aa)). Residues 1284–1295 (HGRDMNRGDSRM) show a composition bias toward basic and acidic residues. Polar residues-rich tracts occupy residues 1302 to 1313 (PPFSSSDWSNNK), 1328 to 1341 (SGTQ…SLSS), and 1348 to 1358 (VSRTPSRQNSA). At Ser1333 the chain carries Phosphoserine. Basic and acidic residues predominate over residues 1383 to 1403 (LEEHDHDNDGGQKDSNSKTSS).

It belongs to the eukaryotic initiation factor 4G family.

It localises to the cytoplasm. Its subcellular location is the perinuclear region. Its function is as follows. Component of the protein complex eIF4F, which is involved in the recognition of the mRNA cap, ATP-dependent unwinding of 5'-terminal secondary structure and recruitment of mRNA to the ribosome. The sequence is that of Eukaryotic translation initiation factor 4 gamma (tif471) from Schizosaccharomyces pombe (strain 972 / ATCC 24843) (Fission yeast).